The primary structure comprises 434 residues: FAD-dependent monooxygenase cfoG (434 aa).

A signal peptide spans Met-1 to Ala-22. Glu-36 provides a ligand contact to FAD. Residues Arg-193 and Tyr-233 contribute to the active site. FAD contacts are provided by Asp-314 and Gly-327.

It belongs to the paxM FAD-dependent monooxygenase family. As to quaternary structure, monomer. The cofactor is FAD.

It functions in the pathway secondary metabolite biosynthesis; flavonoid biosynthesis. Monooxygenase; part of the gene cluster that mediates the biosynthesis of chlorflavonin, a fungal flavonoid with acetolactate synthase inhibitory activity. Within the pathway, cfoG is responsible for the hydroxylation of the flavonoid skeleton at position C8. The pathway begins with the PKS-NRPS hybrid synthetase cfoA that uses benzoic acid or p-hydroxybenzoic acid as a starter unit with four rounds of chain elongation using malonyl-CoA to form the chalcone skeleton. Then, a new type of chalcone isomerase, cfoK, catalyzes the conversion of the chalcone into a flavanone by a histidine-mediated oxa-Michael addition mechanism. The desaturation of flavanone to flavone is catalyzed by a new type of flavone synthase, the flavin mononucleotide (FMN)-dependent oxidoreductase cfoJ. Monooxygenases cfoF, cfoG, and P450 cfoH are responsible for the hydroxylation of the flavonoid skeleton at sites C3, C8, and C2', respectively. Like cfoF, the dehydratase cfoI plays also a role in the hydroxylation of position C3. Methyltransferases cfoB, cfoC, and cfoD then catalyze the methylation of C7-OH, C8-OH, and C3-OH, respectively. Finally, the monooxygenase cfoE is responsible for the chlorination of flavonoid at position C3'. The chain is FAD-dependent monooxygenase cfoG from Aspergillus candidus.